Consider the following 64-residue polypeptide: Large ribosomal subunit protein bL35 (64 aa).

It belongs to the bacterial ribosomal protein bL35 family.

In Desulforudis audaxviator (strain MP104C), this protein is Large ribosomal subunit protein bL35.